Consider the following 447-residue polypeptide: Serine/threonine-protein phosphatase 2A 55 kDa regulatory subunit B delta isoform (447 aa).

7 WD repeats span residues 26 to 65 (AEAD…KSRP), 91 to 132 (EIEE…KRVE), 175 to 213 (AHTY…RSFN), 224 to 264 (ELTE…LCDR), 283 to 321 (EIIS…RPVE), 338 to 379 (ENDC…DITL), and 414 to 447 (DFNK…DKVN).

The protein belongs to the phosphatase 2A regulatory subunit B family. As to quaternary structure, PP2A consists of a common heterodimeric core enzyme, composed of a 36 kDa catalytic subunit (subunit C) and a 65 kDa constant regulatory subunit (PR65 or subunit A), that associates with a variety of regulatory subunits. Proteins that associate with the core dimer include three families of regulatory subunits B (the R2/B/PR55/B55, R3/B''/PR72/PR130/PR59 and R5/B'/B56 families), the 48 kDa variable regulatory subunit, viral proteins, and cell signaling molecules. Interacts with ensa (when phosphorylated at 'Ser-67') and arpp19 (when phosphorylated at 'Ser-67'), leading to inhibit PP2A activity.

It localises to the cytoplasm. In terms of biological role, substrate-recognition subunit of protein phosphatase 2A (PP2A) that plays a key role in cell cycle by controlling mitosis entry and exit. The activity of PP2A complexes containing ppp2r2d (PR55-delta) fluctuate during the cell cycle: the activity is high in interphase and low in mitosis. During mitosis, activity of PP2A is inhibited via interaction with phosphorylated ensa and arpp19 inhibitors. PP2A complexes containing ppp2r2d (PR55-delta) also regulate the activity of TGF-beta/Activin/Nodal signaling by restricting receptor activity. Within the PP2A complexes, the B regulatory subunits modulate substrate selectivity and catalytic activity, and may also direct the localization of the catalytic enzyme to a particular subcellular compartment. The protein is Serine/threonine-protein phosphatase 2A 55 kDa regulatory subunit B delta isoform (ppp2r2d) of Xenopus laevis (African clawed frog).